A 372-amino-acid chain; its full sequence is Chorismate synthase (372 aa).

Positions 48 and 54 each coordinate NADP(+). FMN-binding positions include 125-127 (RSS), 238-239 (NA), G278, 293-297 (KPTSS), and R319.

Belongs to the chorismate synthase family. As to quaternary structure, homotetramer. Requires FMNH2 as cofactor.

The catalysed reaction is 5-O-(1-carboxyvinyl)-3-phosphoshikimate = chorismate + phosphate. It functions in the pathway metabolic intermediate biosynthesis; chorismate biosynthesis; chorismate from D-erythrose 4-phosphate and phosphoenolpyruvate: step 7/7. Catalyzes the anti-1,4-elimination of the C-3 phosphate and the C-6 proR hydrogen from 5-enolpyruvylshikimate-3-phosphate (EPSP) to yield chorismate, which is the branch point compound that serves as the starting substrate for the three terminal pathways of aromatic amino acid biosynthesis. This reaction introduces a second double bond into the aromatic ring system. The protein is Chorismate synthase of Xylella fastidiosa (strain M23).